Reading from the N-terminus, the 385-residue chain is Probable protein phosphatase 2C 38 (385 aa).

Residues 46–357 form the PPM-type phosphatase domain; it reads VAGEFSMSVI…DDITVIVVFL (312 aa). Phosphoserine is present on serine 77. Mn(2+) is bound by residues aspartate 88, glycine 89, aspartate 289, and aspartate 348.

Belongs to the PP2C family. In terms of assembly, interacts with BIK1. The cofactor is Mg(2+). Mn(2+) is required as a cofactor. Post-translationally, phosphorylation at Ser-77 induces dissociation of PP2C38 from BIK1.

The protein resides in the cell membrane. It carries out the reaction O-phospho-L-seryl-[protein] + H2O = L-seryl-[protein] + phosphate. It catalyses the reaction O-phospho-L-threonyl-[protein] + H2O = L-threonyl-[protein] + phosphate. Functionally, may dephosphorylate and repress plasma membrane H(+)-ATPases (PM H(+)-ATPases, e.g. AHA1 and AHA2), thus influencing negatively plant growth and fitness. Involved in pathogen-associated molecular pattern (PAMP)-triggered immunity (PTI) signaling. Negatively regulates immune responses by controlling the phosphorylation and activation status of BIK1, a central rate-limiting kinase in PTI signaling. Impairs the phosphorylation of the NADPH oxidase RBOHD by BIK1. The protein is Probable protein phosphatase 2C 38 of Arabidopsis thaliana (Mouse-ear cress).